Reading from the N-terminus, the 720-residue chain is Fatty acid oxidation complex subunit alpha (720 aa).

Residues 1 to 189 (MIYQGETLSV…KLGLVDAVVA (189 aa)) are enoyl-CoA hydratase/isomerase. Residue Asp296 coordinates substrate. Residues 311–720 (QPTKKGVVLG…ESYYTQQVNA (410 aa)) are 3-hydroxyacyl-CoA dehydrogenase. NAD(+) is bound by residues Met324, Asp343, 400–402 (VVE), Lys407, and Ser429. His450 serves as the catalytic For 3-hydroxyacyl-CoA dehydrogenase activity. Asn453 lines the NAD(+) pocket. Residues Asn500 and Tyr660 each contribute to the substrate site.

This sequence in the N-terminal section; belongs to the enoyl-CoA hydratase/isomerase family. The protein in the C-terminal section; belongs to the 3-hydroxyacyl-CoA dehydrogenase family. As to quaternary structure, heterotetramer of two alpha chains (FadB) and two beta chains (FadA).

The enzyme catalyses a (3S)-3-hydroxyacyl-CoA + NAD(+) = a 3-oxoacyl-CoA + NADH + H(+). The catalysed reaction is a (3S)-3-hydroxyacyl-CoA = a (2E)-enoyl-CoA + H2O. It catalyses the reaction a 4-saturated-(3S)-3-hydroxyacyl-CoA = a (3E)-enoyl-CoA + H2O. It carries out the reaction (3S)-3-hydroxybutanoyl-CoA = (3R)-3-hydroxybutanoyl-CoA. The enzyme catalyses a (3Z)-enoyl-CoA = a 4-saturated (2E)-enoyl-CoA. The catalysed reaction is a (3E)-enoyl-CoA = a 4-saturated (2E)-enoyl-CoA. Its pathway is lipid metabolism; fatty acid beta-oxidation. Its function is as follows. Involved in the aerobic and anaerobic degradation of long-chain fatty acids via beta-oxidation cycle. Catalyzes the formation of 3-oxoacyl-CoA from enoyl-CoA via L-3-hydroxyacyl-CoA. It can also use D-3-hydroxyacyl-CoA and cis-3-enoyl-CoA as substrate. This Photobacterium profundum (strain SS9) protein is Fatty acid oxidation complex subunit alpha.